We begin with the raw amino-acid sequence, 396 residues long: Coiled-coil domain-containing protein 1 (396 aa).

The signal sequence occupies residues 1-21; that stretch reads MAARSALCFLAIITLFVYACG. Coiled-coil stretches lie at residues 53–73, 109–129, 208–242, and 287–308; these read KIDS…NDRD, EVEK…DIID, DKES…ILDT, and YEEI…IDEH. Residues 231–256 show a composition bias toward acidic residues; that stretch reads DANDDVNDILDTDDEDEDEDVQEEKD. 2 disordered regions span residues 231–260 and 288–378; these read DAND…EDIH and EEIE…VADD.

Component of the acid-insoluble and acid-soluble organic matrix of calcified layers of the shell (at protein level).

It localises to the secreted. The sequence is that of Coiled-coil domain-containing protein 1 from Lottia gigantea (Giant owl limpet).